Here is a 180-residue protein sequence, read N- to C-terminus: NADH-quinone oxidoreductase subunit I (180 aa).

2 4Fe-4S ferredoxin-type domains span residues leucine 50 to alanine 80 and glutamate 90 to aspartate 119. 8 residues coordinate [4Fe-4S] cluster: cysteine 60, cysteine 63, cysteine 66, cysteine 70, cysteine 99, cysteine 102, cysteine 105, and cysteine 109.

Belongs to the complex I 23 kDa subunit family. As to quaternary structure, NDH-1 is composed of 13 different subunits. Subunits NuoA, H, J, K, L, M, N constitute the membrane sector of the complex. It depends on [4Fe-4S] cluster as a cofactor.

It localises to the cell inner membrane. It carries out the reaction a quinone + NADH + 5 H(+)(in) = a quinol + NAD(+) + 4 H(+)(out). NDH-1 shuttles electrons from NADH, via FMN and iron-sulfur (Fe-S) centers, to quinones in the respiratory chain. The immediate electron acceptor for the enzyme in this species is believed to be ubiquinone. Couples the redox reaction to proton translocation (for every two electrons transferred, four hydrogen ions are translocated across the cytoplasmic membrane), and thus conserves the redox energy in a proton gradient. In Shigella boydii serotype 4 (strain Sb227), this protein is NADH-quinone oxidoreductase subunit I.